Here is a 221-residue protein sequence, read N- to C-terminus: Serine/arginine-rich splicing factor 9 (221 aa).

2 RRM domains span residues 14 to 89 (GRIY…FPRT) and 111 to 187 (FRVL…PERS). A Glycyl lysine isopeptide (Lys-Gly) (interchain with G-Cter in SUMO2) cross-link involves residue K36. Positions 188–200 (TSYGYSRSRSGSR) are interaction with SAFB1. S189 is modified (phosphoserine). Low complexity predominate over residues 189–198 (SYGYSRSRSG). The interval 189-221 (SYGYSRSRSGSRGRDSPYQSRGSPHYFSPFRPY) is disordered. The residue at position 192 (Y192) is a Phosphotyrosine. Phosphoserine is present on residues S193, S195, S204, S208, and S211. Y214 carries the phosphotyrosine modification. At S216 the chain carries Phosphoserine.

Belongs to the splicing factor SR family. Interacts with KHDRBS3. Interacts with HABP4. Interacts with NOL3/ARC/NOP30. Interacts with NSEP1/YB-1/YB1. Interacts with SAFB/SAFB1. Interacts with SRSF6/SFRS6. Interacts with TRA2B/SFRS10. Interacts with C1QBP. May also interact with DUSP11/PIR1. Post-translationally, extensively phosphorylated on serine residues in the RS domain. As to expression, expressed at high levels in the heart, kidney, pancreas and placenta, and at lower levels in the brain, liver, lung and skeletal muscle.

It localises to the nucleus. Its function is as follows. Plays a role in constitutive splicing and can modulate the selection of alternative splice sites. Represses the splicing of MAPT/Tau exon 10. The protein is Serine/arginine-rich splicing factor 9 (SRSF9) of Homo sapiens (Human).